We begin with the raw amino-acid sequence, 633 residues long: Phosphomethylpyrimidine synthase (633 aa).

Polar residues predominate over residues methionine 1 to alanine 13. The disordered stretch occupies residues methionine 1–serine 22. Substrate is bound by residues asparagine 221, methionine 250, tyrosine 279, histidine 315, serine 335 to glycine 337, aspartate 376 to arginine 379, and glutamate 415. Histidine 419 contacts Zn(2+). Substrate is bound at residue tyrosine 442. Histidine 483 lines the Zn(2+) pocket. [4Fe-4S] cluster is bound by residues cysteine 563, cysteine 566, and cysteine 571.

This sequence belongs to the ThiC family. In terms of assembly, homodimer. The cofactor is [4Fe-4S] cluster.

It carries out the reaction 5-amino-1-(5-phospho-beta-D-ribosyl)imidazole + S-adenosyl-L-methionine = 4-amino-2-methyl-5-(phosphooxymethyl)pyrimidine + CO + 5'-deoxyadenosine + formate + L-methionine + 3 H(+). Its pathway is cofactor biosynthesis; thiamine diphosphate biosynthesis. Functionally, catalyzes the synthesis of the hydroxymethylpyrimidine phosphate (HMP-P) moiety of thiamine from aminoimidazole ribotide (AIR) in a radical S-adenosyl-L-methionine (SAM)-dependent reaction. The sequence is that of Phosphomethylpyrimidine synthase from Bradyrhizobium sp. (strain BTAi1 / ATCC BAA-1182).